Consider the following 145-residue polypeptide: Deoxyuridine 5'-triphosphate nucleotidohydrolase (145 aa).

Residues 65–67 (RSG), Asn-78, 82–84 (TID), and Lys-92 each bind substrate.

The protein belongs to the dUTPase family. Requires Mg(2+) as cofactor.

It carries out the reaction dUTP + H2O = dUMP + diphosphate + H(+). It functions in the pathway pyrimidine metabolism; dUMP biosynthesis; dUMP from dCTP (dUTP route): step 2/2. Functionally, this enzyme is involved in nucleotide metabolism: it produces dUMP, the immediate precursor of thymidine nucleotides and it decreases the intracellular concentration of dUTP so that uracil cannot be incorporated into DNA. The sequence is that of Deoxyuridine 5'-triphosphate nucleotidohydrolase from Syntrophomonas wolfei subsp. wolfei (strain DSM 2245B / Goettingen).